The chain runs to 176 residues: WASH complex subunit 3 (176 aa).

Residues E47–I74 are a coiled coil. Disordered stretches follow at residues A84–V123 and K152–E176. Positions T104–E115 are enriched in low complexity.

Belongs to the CCDC53 family. As to quaternary structure, component of the WASH complex.

The protein resides in the early endosome. Its function is as follows. Acts at least in part as component of the WASH complex which may regulate wash nucleation-promoting factor (NPF) activity and is required for its membrane targeting during endosomal sorting. During embryogenesis, not involved in the wash-dependent developmental migration of hemocytes anteriorly from the tail. The sequence is that of WASH complex subunit 3 from Drosophila melanogaster (Fruit fly).